A 372-amino-acid polypeptide reads, in one-letter code: Tyrosine--tRNA ligase (372 aa).

5 residues coordinate L-tyrosine: Tyr-37, Tyr-169, Gln-173, Asp-176, and Gln-191. The short motif at 246 to 250 (KMSKS) is the 'KMSKS' region element. Lys-249 provides a ligand contact to ATP.

Belongs to the class-I aminoacyl-tRNA synthetase family. TyrS type 4 subfamily. In terms of assembly, homodimer.

The protein localises to the cytoplasm. The enzyme catalyses tRNA(Tyr) + L-tyrosine + ATP = L-tyrosyl-tRNA(Tyr) + AMP + diphosphate + H(+). In terms of biological role, catalyzes the attachment of tyrosine to tRNA(Tyr) in a two-step reaction: tyrosine is first activated by ATP to form Tyr-AMP and then transferred to the acceptor end of tRNA(Tyr). This Pyrobaculum arsenaticum (strain DSM 13514 / JCM 11321 / PZ6) protein is Tyrosine--tRNA ligase.